We begin with the raw amino-acid sequence, 248 residues long: Cytochrome c oxidase subunit 2 (248 aa).

Topologically, residues 1–43 (MTNLLNNWLIINQFGYDLPEPWQLGLQDAAHPVMEEIIFFHDQ) are mitochondrial intermembrane. Residues 44–65 (VMFILIIIITTVLWLIVKALSG) traverse the membrane as a helical segment. Residues 66-79 (KAYHRYLVDGTLLE) are Mitochondrial matrix-facing. A helical membrane pass occupies residues 80-99 (IIWTIVPAIILILIAFPSLK). Topologically, residues 100-248 (LLYLMDEVMD…INWVLSGSDE (149 aa)) are mitochondrial intermembrane. The Cu cation site is built by histidine 180, cysteine 215, glutamate 217, cysteine 219, histidine 223, and methionine 226. Residue glutamate 217 coordinates Mg(2+).

This sequence belongs to the cytochrome c oxidase subunit 2 family. As to quaternary structure, component of the cytochrome c oxidase (complex IV, CIV), a multisubunit enzyme composed of a catalytic core of 3 subunits and several supernumerary subunits. The complex exists as a monomer or a dimer and forms supercomplexes (SCs) in the inner mitochondrial membrane with ubiquinol-cytochrome c oxidoreductase (cytochrome b-c1 complex, complex III, CIII). Requires Cu cation as cofactor.

The protein localises to the mitochondrion inner membrane. It carries out the reaction 4 Fe(II)-[cytochrome c] + O2 + 8 H(+)(in) = 4 Fe(III)-[cytochrome c] + 2 H2O + 4 H(+)(out). Functionally, component of the cytochrome c oxidase, the last enzyme in the mitochondrial electron transport chain which drives oxidative phosphorylation. The respiratory chain contains 3 multisubunit complexes succinate dehydrogenase (complex II, CII), ubiquinol-cytochrome c oxidoreductase (cytochrome b-c1 complex, complex III, CIII) and cytochrome c oxidase (complex IV, CIV), that cooperate to transfer electrons derived from NADH and succinate to molecular oxygen, creating an electrochemical gradient over the inner membrane that drives transmembrane transport and the ATP synthase. Cytochrome c oxidase is the component of the respiratory chain that catalyzes the reduction of oxygen to water. Electrons originating from reduced cytochrome c in the intermembrane space (IMS) are transferred via the dinuclear copper A center (CU(A)) of subunit 2 and heme A of subunit 1 to the active site in subunit 1, a binuclear center (BNC) formed by heme A3 and copper B (CU(B)). The BNC reduces molecular oxygen to 2 water molecules using 4 electrons from cytochrome c in the IMS and 4 protons from the mitochondrial matrix. This is Cytochrome c oxidase subunit 2 (COII) from Metridium senile (Brown sea anemone).